The chain runs to 356 residues: Chavicol O-methyltransferase (356 aa).

Glycine 202, aspartate 225, aspartate 245, methionine 246, and lysine 259 together coordinate S-adenosyl-L-methionine. Histidine 263 functions as the Proton acceptor in the catalytic mechanism.

The protein belongs to the class I-like SAM-binding methyltransferase superfamily. Cation-independent O-methyltransferase family. COMT subfamily. In terms of assembly, homodimer. In terms of tissue distribution, specifically expressed in the peltate glandular trichomes on the surface of the young basil leaves.

It catalyses the reaction (E)-isoeugenol + S-adenosyl-L-methionine = (E)-isomethyleugenol + S-adenosyl-L-homocysteine + H(+). The protein operates within aromatic compound metabolism; phenylpropanoid biosynthesis. Its function is as follows. Phenylpropene O-methyltransferase that catalyzes the methylation of the para-4-hydroxyl of chavicol to methylchavicol. Can also convert eugenol to methyleugenol but with less affinity. The chain is Chavicol O-methyltransferase (CVOMT1) from Ocimum basilicum (Sweet basil).